The sequence spans 157 residues: Transcription elongation factor GreA (157 aa).

Belongs to the GreA/GreB family.

In terms of biological role, necessary for efficient RNA polymerase transcription elongation past template-encoded arresting sites. The arresting sites in DNA have the property of trapping a certain fraction of elongating RNA polymerases that pass through, resulting in locked ternary complexes. Cleavage of the nascent transcript by cleavage factors such as GreA or GreB allows the resumption of elongation from the new 3'terminus. GreA releases sequences of 2 to 3 nucleotides. In Phenylobacterium zucineum (strain HLK1), this protein is Transcription elongation factor GreA.